The following is a 311-amino-acid chain: Putative mitochondrial transporter UCP3 (311 aa).

Topologically, residues 1-10 (MVGLKPSEVP) are mitochondrial intermembrane. The chain crosses the membrane as a helical span at residues 11–32 (PTTAVKFLGAGTAACFADLLTF). Solcar repeat units follow at residues 11 to 105 (PTTA…VKQF), 114 to 205 (SSIT…IKEK), and 214 to 299 (DNFP…LKRA). Residues 33–76 (PLDTAKVRLQIQGENQATQAARRIQYRGVLGTILTMVRTEGPRS) lie on the Mitochondrial matrix side of the membrane. The helical transmembrane segment at 77–99 (PYNGLVAGLQRQMSFASIRIGLY) threads the bilayer. The Mitochondrial intermembrane segment spans residues 100 to 119 (DSVKQFYTPKGSDHSSITTR). Residues 120–136 (ILAGCTTGAMAVSCAQP) form a helical membrane-spanning segment. Residues 137–182 (TDVVKVRFQASIHLGAGSNRKYSGTMDAYRTIAREEGVRGLWKGTL) are Mitochondrial matrix-facing. A helical transmembrane segment spans residues 183–199 (PNITRNAIVNCAEMVTY). Residues 200–216 (DIIKEKLLDYHLLTDNF) are Mitochondrial intermembrane-facing. The chain crosses the membrane as a helical span at residues 217 to 236 (PCHLISAFGAGFCATVVASP). Over 237 to 270 (VDVVKTRYMNSPPGQYCSPLDCMLKMVTQEGPTA) the chain is Mitochondrial matrix. Residues 271 to 293 (FYKGFTPSFLRLGTWNVVMFVTY) form a helical membrane-spanning segment. The segment at 278 to 300 (SFLRLGTWNVVMFVTYEQLKRAL) is purine nucleotide binding. The Mitochondrial intermembrane segment spans residues 294 to 311 (EQLKRALMKVQMLRESPF).

This sequence belongs to the mitochondrial carrier (TC 2.A.29) family. In terms of assembly, interacts with HAX1; the interaction is direct and calcium-dependent.

It localises to the mitochondrion inner membrane. Functionally, putative transmembrane transporter that plays a role in mitochondrial metabolism via an as yet unclear mechanism. Originally, this mitochondrial protein was thought to act as a proton transmembrane transporter from the mitochondrial intermembrane space into the matrix, causing proton leaks through the inner mitochondrial membrane, thereby uncoupling mitochondrial membrane potential generation from ATP synthesis. However, this function is controversial and uncoupling may not be the function, or at least not the main function, but rather a consequence of more conventional metabolite transporter activity. In Canis lupus familiaris (Dog), this protein is Putative mitochondrial transporter UCP3.